The following is a 150-amino-acid chain: Monooxygenase nsrS (150 aa).

It belongs to the avfA family.

It participates in secondary metabolite biosynthesis. Functionally, monooxygenase; part of the gene cluster that mediates the biosynthesis of the tetrahydroxanthone dimer neosartorin, which exhibits antibacterial activity. The two different monomeric units appear to be synthesized by the same set of enzymes, among which the Baeyer-Villiger monooxygenase nsrF is the key enzyme for the divergence of the biosynthetic routes. The pathway begins with the synthesis of atrochrysone thioester by the polyketide synthase nsrB. The atrochrysone carboxyl ACP thioesterase nsrC then breaks the thioester bond and releases the atrochrysone carboxylic acid from AacuL. Atrochrysone carboxylic acid is decarboxylated by the decarboxylase nsrE, and oxidized by the anthrone oxygenase nsrD to yield emodin. Emodin is then reduced to emodin hydroquinone by the oxidoreductase nsrR. A-ring reduction by the short chain dehydrogenase nsrJ, dehydration by the scytalone dehydratase-like protein nsrI and probable spontaneous re-oxidation, results in overall deoxygenation to chrysophanol. The Baeyer-Villiger monooxygenase nsrF accepts chrysophanol as a substrate to insert one oxygen atom at two different positions to yield the precursors of both monomric units. NsrF is promiscuous/flexible in interacting with the 2 (non methylated and methylated) aromatic rings of chrysophanol, thus diverging the biosynthetic pathway at this point. After the hydrolysis of the lactones, methylesterification by the methyltransferase nsrG yields respectively moniliphenone and 2,2',6'-trihydroxy-4-methyl-6-methoxya-cyldiphenylmethanone. The next steps are the hydroxylation by the FAD-dependent monooxygenase nsrK, followed by isomerization by the monooxygenase nsrQ. The short chain dehydrogenase/reductase nsrO then catalyzes the C-5 ketoreduction to give the xanthone skeleton of blennolide C and 5-acetylblennolide A. The acetyltransferase nsrL has a strict substrate specificity and uses only blennolide A but not blennolide C to yield 5-acetylblennolide A as the single-acetylated product. In the final step of the biosynthesis, the heterodimerization of the 2 xanthones, blennolide C and 5-acetylblennolide A, is catalyzed by the cytochrome P450 monooxygenase nsrP. NsrP can utilize at least three different xanthones as its substrates to perform the dimerization reaction. This is Monooxygenase nsrS from Aspergillus novofumigatus (strain IBT 16806).